The chain runs to 230 residues: Protein-L-isoaspartate O-methyltransferase (230 aa).

S68 is an active-site residue.

Belongs to the methyltransferase superfamily. L-isoaspartyl/D-aspartyl protein methyltransferase family.

It is found in the cytoplasm. It carries out the reaction [protein]-L-isoaspartate + S-adenosyl-L-methionine = [protein]-L-isoaspartate alpha-methyl ester + S-adenosyl-L-homocysteine. In terms of biological role, catalyzes the methyl esterification of L-isoaspartyl residues in peptides and proteins that result from spontaneous decomposition of normal L-aspartyl and L-asparaginyl residues. It plays a role in the repair and/or degradation of damaged proteins. This chain is Protein-L-isoaspartate O-methyltransferase, found in Salinibacter ruber (strain DSM 13855 / M31).